The sequence spans 98 residues: uncharacterized protein (98 aa).

The protein belongs to the HHV-5 UL19 protein family.

This is an uncharacterized protein from Human cytomegalovirus (strain AD169) (HHV-5).